The following is a 256-amino-acid chain: Imidazole glycerol phosphate synthase subunit HisF (256 aa).

Active-site residues include D11 and D130.

Belongs to the HisA/HisF family. Heterodimer of HisH and HisF.

The protein localises to the cytoplasm. The enzyme catalyses 5-[(5-phospho-1-deoxy-D-ribulos-1-ylimino)methylamino]-1-(5-phospho-beta-D-ribosyl)imidazole-4-carboxamide + L-glutamine = D-erythro-1-(imidazol-4-yl)glycerol 3-phosphate + 5-amino-1-(5-phospho-beta-D-ribosyl)imidazole-4-carboxamide + L-glutamate + H(+). It functions in the pathway amino-acid biosynthesis; L-histidine biosynthesis; L-histidine from 5-phospho-alpha-D-ribose 1-diphosphate: step 5/9. IGPS catalyzes the conversion of PRFAR and glutamine to IGP, AICAR and glutamate. The HisF subunit catalyzes the cyclization activity that produces IGP and AICAR from PRFAR using the ammonia provided by the HisH subunit. This chain is Imidazole glycerol phosphate synthase subunit HisF, found in Prochlorococcus marinus (strain AS9601).